We begin with the raw amino-acid sequence, 454 residues long: tRNA modification GTPase MnmE (454 aa).

Arginine 23, glutamate 80, and lysine 120 together coordinate (6S)-5-formyl-5,6,7,8-tetrahydrofolate. The TrmE-type G domain maps to 216-377 (GMKVVIAGRP…LRDHLKQSMG (162 aa)). Asparagine 226 serves as a coordination point for K(+). Residues 226-231 (NAGKSS), 245-251 (TDIAGTT), 270-273 (DTAG), 335-338 (NKAD), and 358-360 (SAR) each bind GTP. A Mg(2+)-binding site is contributed by serine 230. Residues threonine 245, isoleucine 247, and threonine 250 each coordinate K(+). Threonine 251 lines the Mg(2+) pocket. Lysine 454 serves as a coordination point for (6S)-5-formyl-5,6,7,8-tetrahydrofolate.

This sequence belongs to the TRAFAC class TrmE-Era-EngA-EngB-Septin-like GTPase superfamily. TrmE GTPase family. As to quaternary structure, homodimer. Heterotetramer of two MnmE and two MnmG subunits. It depends on K(+) as a cofactor.

Its subcellular location is the cytoplasm. Functionally, exhibits a very high intrinsic GTPase hydrolysis rate. Involved in the addition of a carboxymethylaminomethyl (cmnm) group at the wobble position (U34) of certain tRNAs, forming tRNA-cmnm(5)s(2)U34. The sequence is that of tRNA modification GTPase MnmE from Yersinia pestis.